The primary structure comprises 184 residues: Photosystem I assembly protein Ycf4 (184 aa).

A run of 2 helical transmembrane segments spans residues 19–39 and 64–84; these read ISNFCWAFLLFLGSLGFVLVG and LVMSFYGIAGLFISSYLWCTI.

Belongs to the Ycf4 family.

Its subcellular location is the plastid. The protein resides in the chloroplast thylakoid membrane. Seems to be required for the assembly of the photosystem I complex. The chain is Photosystem I assembly protein Ycf4 from Oenothera elata subsp. hookeri (Hooker's evening primrose).